The chain runs to 225 residues: Orotate phosphoribosyltransferase (225 aa).

Position 29 (Lys-29) interacts with 5-phospho-alpha-D-ribose 1-diphosphate. An orotate-binding site is contributed by 37–38 (FF). 5-phospho-alpha-D-ribose 1-diphosphate-binding positions include 75–76 (YK), Arg-101, Lys-102, Lys-105, His-107, and 126–134 (DDVISAGTS). Orotate contacts are provided by Ser-130 and Arg-158.

The protein belongs to the purine/pyrimidine phosphoribosyltransferase family. PyrE subfamily. Homodimer. The cofactor is Mg(2+).

The enzyme catalyses orotidine 5'-phosphate + diphosphate = orotate + 5-phospho-alpha-D-ribose 1-diphosphate. Its pathway is pyrimidine metabolism; UMP biosynthesis via de novo pathway; UMP from orotate: step 1/2. Functionally, catalyzes the transfer of a ribosyl phosphate group from 5-phosphoribose 1-diphosphate to orotate, leading to the formation of orotidine monophosphate (OMP). In Ralstonia pickettii (strain 12J), this protein is Orotate phosphoribosyltransferase.